The sequence spans 365 residues: tRNA(Met) cytidine acetate ligase (365 aa).

Residues 7 to 20, Gly-96, Asn-152, and Arg-175 contribute to the ATP site; that span reads IAEF…HKYL.

This sequence belongs to the TmcAL family.

Its subcellular location is the cytoplasm. It catalyses the reaction cytidine(34) in elongator tRNA(Met) + acetate + ATP = N(4)-acetylcytidine(34) in elongator tRNA(Met) + AMP + diphosphate. In terms of biological role, catalyzes the formation of N(4)-acetylcytidine (ac(4)C) at the wobble position of elongator tRNA(Met), using acetate and ATP as substrates. First activates an acetate ion to form acetyladenylate (Ac-AMP) and then transfers the acetyl group to tRNA to form ac(4)C34. The sequence is that of tRNA(Met) cytidine acetate ligase from Streptococcus pneumoniae (strain P1031).